We begin with the raw amino-acid sequence, 383 residues long: MILSQTMVAEAEIRVLDVKCHISAPKDQKNFQIDEVRVSESVRAEISGSAETPRFGSGMSCVTTTIGESASDFIPTIRSGSFADIRSRETMEDEHICIDDLSAHLGSYNFSVPSAFYGVFDGHGGPEAAIFMKENLTRLFFQDAVFPEMPSIVDAFFLEELENSHRKAFALADLAMADETIVSGSCGTTALTALIIGRHLLVANAGDCRAVLCRRGVAVDMSFDHRSTYEPERRRIEDLGGYFEDGYLNGVLAVTRAIGDWELKNPFTDSSSPLISDPEIGQIILTEDDEFLILACDGIWDVLSSQNAVSNVRQGLRRHGDPRQCAMELGKEAARLQSSDNMTVIVICFSSVPSSPKQPQRRRLRFCVSDEARARLQAMLAGE.

A PPM-type phosphatase domain is found at 78-349; it reads RSGSFADIRS…DNMTVIVICF (272 aa). Positions 121, 122, 297, and 340 each coordinate Mn(2+).

Belongs to the PP2C family. Mg(2+) is required as a cofactor. The cofactor is Mn(2+).

The enzyme catalyses O-phospho-L-seryl-[protein] + H2O = L-seryl-[protein] + phosphate. It catalyses the reaction O-phospho-L-threonyl-[protein] + H2O = L-threonyl-[protein] + phosphate. The protein is Probable protein phosphatase 2C 13 of Arabidopsis thaliana (Mouse-ear cress).